Here is a 605-residue protein sequence, read N- to C-terminus: Elongation factor 4 (605 aa).

Positions 4–186 (SATRNFCIIA…AIVARVPAPK (183 aa)) constitute a tr-type G domain. Residues 16 to 21 (DHGKST) and 133 to 136 (NKID) each bind GTP.

This sequence belongs to the TRAFAC class translation factor GTPase superfamily. Classic translation factor GTPase family. LepA subfamily.

The protein localises to the cell membrane. The catalysed reaction is GTP + H2O = GDP + phosphate + H(+). In terms of biological role, required for accurate and efficient protein synthesis under certain stress conditions. May act as a fidelity factor of the translation reaction, by catalyzing a one-codon backward translocation of tRNAs on improperly translocated ribosomes. Back-translocation proceeds from a post-translocation (POST) complex to a pre-translocation (PRE) complex, thus giving elongation factor G a second chance to translocate the tRNAs correctly. Binds to ribosomes in a GTP-dependent manner. The chain is Elongation factor 4 from Dehalococcoides mccartyi (strain ATCC BAA-2266 / KCTC 15142 / 195) (Dehalococcoides ethenogenes (strain 195)).